We begin with the raw amino-acid sequence, 126 residues long: Fluoride-specific ion channel FluC 3 (126 aa).

Helical transmembrane passes span Met7 to Ile27, Leu37 to Phe57, Leu68 to Met87, and Ala101 to Gly121. Na(+) contacts are provided by Gly79 and Thr82.

It belongs to the fluoride channel Fluc/FEX (TC 1.A.43) family.

The protein localises to the cell inner membrane. It catalyses the reaction fluoride(in) = fluoride(out). Na(+) is not transported, but it plays an essential structural role and its presence is essential for fluoride channel function. Fluoride-specific ion channel. Important for reducing fluoride concentration in the cell, thus reducing its toxicity. The sequence is that of Fluoride-specific ion channel FluC 3 from Yersinia pestis.